The primary structure comprises 238 residues: Large ribosomal subunit protein uL1 (238 aa).

This sequence belongs to the universal ribosomal protein uL1 family. As to quaternary structure, part of the 50S ribosomal subunit.

In terms of biological role, binds directly to 23S rRNA. The L1 stalk is quite mobile in the ribosome, and is involved in E site tRNA release. Its function is as follows. Protein L1 is also a translational repressor protein, it controls the translation of the L11 operon by binding to its mRNA. This is Large ribosomal subunit protein uL1 from Nostoc sp. (strain PCC 7120 / SAG 25.82 / UTEX 2576).